Consider the following 541-residue polypeptide: Zinc finger protein 513 (541 aa).

The segment at 1–120 is disordered; sequence MPRRKQSHPQ…ARGERPGPAC (120 aa). Over residues 44–55 the composition is skewed to acidic residues; it reads LEFEEEEEEEEG. Serine 85 and serine 96 each carry phosphoserine. Over residues 103 to 115 the composition is skewed to basic and acidic residues; the sequence is EPARGPGEARGER. C2H2-type zinc fingers lie at residues 150 to 172, 178 to 200, 206 to 228, 360 to 382, 388 to 410, 416 to 438, 444 to 466, and 472 to 494; these read YSCR…MQTH, FRCG…TRTH, YRCP…QRTH, FACS…MKTH, FRCA…QRVH, YKCP…GRIH, FRCS…MLRH, and FRCA…QKVH. The interval 492–541 is disordered; that stretch reads KVHGHGGAGGPGLSAPEGWAPPHSPPSVLSTRGSAALGATGSRALHTDSP.

It belongs to the krueppel C2H2-type zinc-finger protein family. Binds DNA. Can associate with the proximal promoter regions of PAX6 and SP4, and their known targets including ARR3, RHO, OPN1MW2 and OPN1SW.

The protein localises to the nucleus. Its function is as follows. Transcriptional regulator that plays a role in retinal development and maintenance. The chain is Zinc finger protein 513 (Znf513) from Rattus norvegicus (Rat).